The sequence spans 262 residues: Tryptophan synthase alpha chain (262 aa).

Catalysis depends on proton acceptor residues E48 and D59.

This sequence belongs to the TrpA family. As to quaternary structure, tetramer of two alpha and two beta chains.

It catalyses the reaction (1S,2R)-1-C-(indol-3-yl)glycerol 3-phosphate + L-serine = D-glyceraldehyde 3-phosphate + L-tryptophan + H2O. The protein operates within amino-acid biosynthesis; L-tryptophan biosynthesis; L-tryptophan from chorismate: step 5/5. The alpha subunit is responsible for the aldol cleavage of indoleglycerol phosphate to indole and glyceraldehyde 3-phosphate. In Helicobacter pylori (strain G27), this protein is Tryptophan synthase alpha chain.